A 294-amino-acid chain; its full sequence is UPF0718 protein YcgR (294 aa).

8 helical membrane-spanning segments follow: residues 15–35, 54–74, 92–112, 117–137, 174–194, 215–235, 247–267, and 273–293; these read ISIL…SGII, LAVL…CGII, AFML…YIAF, SVVF…GVIL, IDEF…AAAM, LVMM…AFIA, LIAF…MMLA, and FVFL…LLVK.

Belongs to the UPF0718 family.

It localises to the cell membrane. In Bacillus subtilis (strain 168), this protein is UPF0718 protein YcgR (ycgR).